The following is a 376-amino-acid chain: N-acetyldiaminopimelate deacetylase (376 aa).

Asp69 is an active-site residue. Glu128 (proton acceptor) is an active-site residue.

This sequence belongs to the peptidase M20A family. N-acetyldiaminopimelate deacetylase subfamily.

The catalysed reaction is N-acetyl-(2S,6S)-2,6-diaminopimelate + H2O = (2S,6S)-2,6-diaminopimelate + acetate. The protein operates within amino-acid biosynthesis; L-lysine biosynthesis via DAP pathway; LL-2,6-diaminopimelate from (S)-tetrahydrodipicolinate (acetylase route): step 3/3. Functionally, catalyzes the conversion of N-acetyl-diaminopimelate to diaminopimelate and acetate. The chain is N-acetyldiaminopimelate deacetylase from Streptococcus pneumoniae (strain CGSP14).